The chain runs to 171 residues: Glycine cleavage system H protein 4 (171 aa).

Positions 30–112 constitute a Lipoyl-binding domain; sequence FAEVGITDYA…YEAGWIAVIE (83 aa). Lys-71 bears the N6-lipoyllysine mark. Positions 139-171 are disordered; that stretch reads EKEEEVEVKEEELIETESIEELSEEELGYEENK.

The protein belongs to the GcvH family. The glycine cleavage system is composed of four proteins: P, T, L and H. Requires (R)-lipoate as cofactor.

In terms of biological role, the glycine cleavage system catalyzes the degradation of glycine. The H protein shuttles the methylamine group of glycine from the P protein to the T protein. The sequence is that of Glycine cleavage system H protein 4 from Aquifex aeolicus (strain VF5).